A 62-amino-acid polypeptide reads, in one-letter code: U10-hottentoxin-Hj3a (62 aa).

A signal peptide spans 1 to 22; that stretch reads MQKLLIILILFCILKFNVDVEG. Cystine bridges form between cysteine 28-cysteine 46, cysteine 33-cysteine 59, and cysteine 37-cysteine 61.

It belongs to the short scorpion toxin superfamily. Potassium channel inhibitor family. Alpha-KTx 23 subfamily. In terms of tissue distribution, expressed by the venom gland.

The protein localises to the secreted. Functionally, may block potassium channels. In Hottentotta judaicus (Black scorpion), this protein is U10-hottentoxin-Hj3a.